Here is a 186-residue protein sequence, read N- to C-terminus: MKMEVIFKTDLRSSSQVVFHAGSLYNWFSVEIINSGRIVTTAIKTLLSTVKYDIVKSARIYAGQGYTEHQAQEEWNMILHVLFEEETESSASSESIHEKNDNGTNECTSSFETLFEQEPSSEVPKDSKLYMLAQKTVQHIEQYGKAPDFNKVIRAHNFIQTIHGTPLKEEEKEVVRLMVIKLLKKK.

It belongs to the asfivirus phosphoprotein p30 family. Oligomer. Interacts with host HNRNPK. Phosphorylated on serine residues in the 115 N-terminal amino acids.

The protein resides in the host cytoplasm. It localises to the host nucleus. It is found in the virion. In terms of biological role, modifies the subcellular distribution of heterogeneous nuclear ribonucleoprotein K (HNRNPK) and may contribute to modulate HNRNPK functions related to processing and export of mRNAs during ASFV infection. Necessary for virus internalization. The polypeptide is Phosphoprotein p30 (African swine fever virus (isolate Tick/South Africa/Pretoriuskop Pr4/1996) (ASFV)).